Here is a 258-residue protein sequence, read N- to C-terminus: Imidazole glycerol phosphate synthase subunit HisF (258 aa).

Catalysis depends on residues aspartate 11 and aspartate 130.

This sequence belongs to the HisA/HisF family. Heterodimer of HisH and HisF.

The protein resides in the cytoplasm. It carries out the reaction 5-[(5-phospho-1-deoxy-D-ribulos-1-ylimino)methylamino]-1-(5-phospho-beta-D-ribosyl)imidazole-4-carboxamide + L-glutamine = D-erythro-1-(imidazol-4-yl)glycerol 3-phosphate + 5-amino-1-(5-phospho-beta-D-ribosyl)imidazole-4-carboxamide + L-glutamate + H(+). It functions in the pathway amino-acid biosynthesis; L-histidine biosynthesis; L-histidine from 5-phospho-alpha-D-ribose 1-diphosphate: step 5/9. Functionally, IGPS catalyzes the conversion of PRFAR and glutamine to IGP, AICAR and glutamate. The HisF subunit catalyzes the cyclization activity that produces IGP and AICAR from PRFAR using the ammonia provided by the HisH subunit. The polypeptide is Imidazole glycerol phosphate synthase subunit HisF (Edwardsiella ictaluri (strain 93-146)).